Here is a 40-residue protein sequence, read N- to C-terminus: Photosystem II reaction center protein J (40 aa).

The chain crosses the membrane as a helical span at residues 8–28; sequence IPLWIIGTVTGLLVIGLIGIF.

It belongs to the PsbJ family. PSII is composed of 1 copy each of membrane proteins PsbA, PsbB, PsbC, PsbD, PsbE, PsbF, PsbH, PsbI, PsbJ, PsbK, PsbL, PsbM, PsbT, PsbX, PsbY, PsbZ, Psb30/Ycf12, at least 3 peripheral proteins of the oxygen-evolving complex and a large number of cofactors. It forms dimeric complexes.

The protein resides in the plastid. It is found in the chloroplast thylakoid membrane. Functionally, one of the components of the core complex of photosystem II (PSII). PSII is a light-driven water:plastoquinone oxidoreductase that uses light energy to abstract electrons from H(2)O, generating O(2) and a proton gradient subsequently used for ATP formation. It consists of a core antenna complex that captures photons, and an electron transfer chain that converts photonic excitation into a charge separation. This Ipomoea purpurea (Common morning glory) protein is Photosystem II reaction center protein J.